The following is a 208-amino-acid chain: Thymidylate kinase (208 aa).

Gly10 to Thr17 provides a ligand contact to ATP.

Belongs to the thymidylate kinase family.

It catalyses the reaction dTMP + ATP = dTDP + ADP. In terms of biological role, phosphorylation of dTMP to form dTDP in both de novo and salvage pathways of dTTP synthesis. The sequence is that of Thymidylate kinase from Listeria monocytogenes serotype 4a (strain HCC23).